The following is a 445-amino-acid chain: Trigger factor (445 aa).

In terms of domain architecture, PPIase FKBP-type spans 162-247 (GDQVTIDAIG…IKAVHTAEPT (86 aa)).

Belongs to the FKBP-type PPIase family. Tig subfamily.

Its subcellular location is the cytoplasm. The enzyme catalyses [protein]-peptidylproline (omega=180) = [protein]-peptidylproline (omega=0). Involved in protein export. Acts as a chaperone by maintaining the newly synthesized protein in an open conformation. Functions as a peptidyl-prolyl cis-trans isomerase. In Rickettsia africae (strain ESF-5), this protein is Trigger factor.